The primary structure comprises 811 residues: Mitochondrial intermediate peptidase (811 aa).

The N-terminal 25 residues, Met-1–Ser-25, are a transit peptide targeting the mitochondrion. Residues Thr-423–Thr-450 are disordered. The span at Thr-431–Thr-450 shows a compositional bias: low complexity. Residue His-593 participates in Zn(2+) binding. The active site involves Glu-594. Zn(2+)-binding residues include His-597 and His-600.

The protein belongs to the peptidase M3 family. It depends on Zn(2+) as a cofactor.

It localises to the mitochondrion matrix. The enzyme catalyses Release of an N-terminal octapeptide as second stage of processing of some proteins imported into the mitochondrion.. Functionally, cleaves proteins, imported into the mitochondrion, to their mature size. While most mitochondrial precursor proteins are processed to the mature form in one step by mitochondrial processing peptidase (MPP), the sequential cleavage by MIP of an octapeptide after initial processing by MPP is a required step for a subgroup of nuclear-encoded precursor proteins destined for the matrix or the inner membrane. This is Mitochondrial intermediate peptidase (OCT1) from Lodderomyces elongisporus (strain ATCC 11503 / CBS 2605 / JCM 1781 / NBRC 1676 / NRRL YB-4239) (Yeast).